The chain runs to 347 residues: D-alanine--D-alanine ligase (347 aa).

The ATP-grasp domain maps to 131–333 (KRVLESAGIA…YPELIERLVD (203 aa)). 161-216 (EEKLAYPVFTKPSNMGSSVGISKSENQEELRPALELAFRYDSRVLVEQGVNAREIE) lines the ATP pocket. Mg(2+) contacts are provided by Asp-287, Glu-300, and Asn-302.

It belongs to the D-alanine--D-alanine ligase family. Mg(2+) is required as a cofactor. Requires Mn(2+) as cofactor.

It localises to the cytoplasm. The catalysed reaction is 2 D-alanine + ATP = D-alanyl-D-alanine + ADP + phosphate + H(+). It functions in the pathway cell wall biogenesis; peptidoglycan biosynthesis. Its function is as follows. Cell wall formation. The polypeptide is D-alanine--D-alanine ligase (Streptococcus pneumoniae (strain Taiwan19F-14)).